We begin with the raw amino-acid sequence, 182 residues long: Trypsin inhibitor 2 (182 aa).

The residue at position 1 (Q1) is a Pyrrolidone carboxylic acid. Disulfide bonds link C40–C84 and C136–C147.

It belongs to the protease inhibitor I3 (leguminous Kunitz-type inhibitor) family.

The chain is Trypsin inhibitor 2 from Psophocarpus tetragonolobus (Winged bean).